A 317-amino-acid chain; its full sequence is Fe-S cluster assembly protein DRE2 (317 aa).

The N-terminal SAM-like domain stretch occupies residues 1–131 (MERMLFLSPP…KPNFGAQDTV (131 aa)). Positions 132 to 209 (PLKLGKKKKA…EEALMDEEDM (78 aa)) are linker. Positions 219, 230, 233, and 235 each coordinate [2Fe-2S] cluster. Residues 219-235 (CRPKAGKRRRACKDCTC) are fe-S binding site A. Positions 280, 283, 291, and 294 each coordinate [4Fe-4S] cluster. 2 short sequence motifs (cx2C motif) span residues 280-283 (CGNC) and 291-294 (CDGC). A fe-S binding site B region spans residues 280-294 (CGNCALGDAFRCDGC).

It belongs to the anamorsin family. As to quaternary structure, monomer. Interacts with TAH18. Interacts with MIA40. [2Fe-2S] cluster serves as cofactor. It depends on [4Fe-4S] cluster as a cofactor.

The protein resides in the cytoplasm. Its subcellular location is the mitochondrion intermembrane space. Component of the cytosolic iron-sulfur (Fe-S) protein assembly (CIA) machinery required for the maturation of extramitochondrial Fe-S proteins. Part of an electron transfer chain functioning in an early step of cytosolic Fe-S biogenesis, facilitating the de novo assembly of a [4Fe-4S] cluster on the scaffold complex CFD1-NBP35. Electrons are transferred to DRE2 from NADPH via the FAD- and FMN-containing protein TAH18. TAH18-DRE2 are also required for the assembly of the diferric tyrosyl radical cofactor of ribonucleotide reductase (RNR), probably by providing electrons for reduction during radical cofactor maturation in the catalytic small subunit RNR2. The protein is Fe-S cluster assembly protein DRE2 of Uncinocarpus reesii (strain UAMH 1704).